A 511-amino-acid chain; its full sequence is Fusicocca-1,10(14)-diene-8beta,16-diol C-9 hydroxylase (511 aa).

The chain crosses the membrane as a helical span at residues 7-29 (TVAALAAVFVAGTLLSRLASWIR). Asn-64, Asn-163, and Asn-343 each carry an N-linked (GlcNAc...) asparagine glycan. Heme is bound at residue Cys-450.

This sequence belongs to the cytochrome P450 family. Heme serves as cofactor.

It localises to the membrane. It participates in mycotoxin biosynthesis. In terms of biological role, cytochrome P450 monooxygenase; part of the 2 gene clusters that mediate the biosynthesis of fusicoccins, diterpene glucosides that display phytohormone-like activity and function as potent activators of plasma membrane H(+)-ATPases in plants by modifying 14-3-3 proteins and cause the plant disease constriction canker. The first step in the pathway is performed by the fusicoccadiene synthase PaFS that possesses both prenyl transferase and terpene cyclase activity, converting isopentenyl diphosphate and dimethylallyl diphosphate into geranylgeranyl diphosphate (GGDP) and successively converting GGDP into fusicocca-2,10(14)-diene, a precursor for fusicoccin H. The second step is the oxidation at the C-8 position by the cytochrome P450 monooxygenase PaP450-2 to yield fusicocca-2,10(14)-diene-8-beta-ol. The cytochrome P450 monooxygenase PaP450-1 then catalyzes the hydroxylation at the C-16 position to produce fusicocca-2,10(14)-diene-8-beta,16-diol. The dioxygenase fc-dox then catalyzes the 16-oxydation of fusicocca-2,10(14)-diene-8-beta,16-diol to yield an aldehyde (8-beta-hydroxyfusicocca-1,10(14)-dien-16-al). The short-chain dehydrogenase/reductase fc-sdr catalyzes the reduction of the aldehyde to yield fusicocca-1,10(14)-diene-8-beta,16-diol. The next step is the hydroxylation at C-9 performed by the cytochrome P450 monooxygenase PaP450-3 that leads to fusicoccin H aglycon which is glycosylated to fusicoccin H by the O-glycosyltransferase PaGT. Hydroxylation at C-12 by the cytochrome P450 monooxygenase PaP450-4 leads then to the production of fusicoccin Q and is followed by methylation by the O-methyltransferase PaMT to yield fusicoccin P. Fusicoccin P is further converted to fusicoccin J via prenylation by the O-glucose prenyltransferase PaPT. Cytochrome P450 monooxygenase PaP450-5 then performs hydroxylation at C-19 to yield dideacetyl-fusicoccin A which is acetylated to 3'-O-deacetyl-fusicoccin A by the O-acetyltransferase PaAT-2. Finally, a another acetylation by the O-acetyltransferase PaAT-1 yields fusicoccin A. In Phomopsis amygdali (Fusicoccum amygdali), this protein is Fusicocca-1,10(14)-diene-8beta,16-diol C-9 hydroxylase.